Reading from the N-terminus, the 194-residue chain is Fe/S biogenesis protein NfuA (194 aa).

[4Fe-4S] cluster contacts are provided by Cys-151 and Cys-154.

This sequence belongs to the NfuA family. As to quaternary structure, homodimer. It depends on [4Fe-4S] cluster as a cofactor.

Its function is as follows. Involved in iron-sulfur cluster biogenesis. Binds a 4Fe-4S cluster, can transfer this cluster to apoproteins, and thereby intervenes in the maturation of Fe/S proteins. Could also act as a scaffold/chaperone for damaged Fe/S proteins. In Photobacterium profundum (strain SS9), this protein is Fe/S biogenesis protein NfuA.